The primary structure comprises 689 residues: DNA topoisomerase 1 (689 aa).

One can recognise a Toprim domain in the interval 3–113; sequence DNLVIVESPA…KENRVVFNEI (111 aa). 2 residues coordinate Mg(2+): E9 and D82. Residues 129 to 557 enclose the Topo IA-type catalytic domain; it reads EMNLVDAQQA…FFSSFKQDVE (429 aa). An interaction with DNA region spans residues 163–168; the sequence is SAGRVQ. Catalysis depends on Y298, which acts as the O-(5'-phospho-DNA)-tyrosine intermediate. The disordered stretch occupies residues 328–357; the sequence is SKRKASGKQGDQDAHEAIRPSSTMRTPDDM. 3 C4-type zinc fingers span residues 577–603, 617–645, and 658–681; these read CEVC…FPDC, CPKC…YPEC, and CPKC…CSNC.

The protein belongs to the type IA topoisomerase family. In terms of assembly, monomer. Mg(2+) serves as cofactor.

It carries out the reaction ATP-independent breakage of single-stranded DNA, followed by passage and rejoining.. Releases the supercoiling and torsional tension of DNA, which is introduced during the DNA replication and transcription, by transiently cleaving and rejoining one strand of the DNA duplex. Introduces a single-strand break via transesterification at a target site in duplex DNA. The scissile phosphodiester is attacked by the catalytic tyrosine of the enzyme, resulting in the formation of a DNA-(5'-phosphotyrosyl)-enzyme intermediate and the expulsion of a 3'-OH DNA strand. The free DNA strand then undergoes passage around the unbroken strand, thus removing DNA supercoils. Finally, in the religation step, the DNA 3'-OH attacks the covalent intermediate to expel the active-site tyrosine and restore the DNA phosphodiester backbone. This is DNA topoisomerase 1 from Staphylococcus aureus.